The following is a 209-amino-acid chain: Uracil phosphoribosyltransferase (209 aa).

5-phospho-alpha-D-ribose 1-diphosphate is bound by residues R79, R104, and 131–139; that span reads DPMLATGGS. Uracil is bound by residues I194 and 199–201; that span reads GDA. Residue D200 coordinates 5-phospho-alpha-D-ribose 1-diphosphate.

This sequence belongs to the UPRTase family. It depends on Mg(2+) as a cofactor.

The catalysed reaction is UMP + diphosphate = 5-phospho-alpha-D-ribose 1-diphosphate + uracil. It functions in the pathway pyrimidine metabolism; UMP biosynthesis via salvage pathway; UMP from uracil: step 1/1. Its activity is regulated as follows. Allosterically activated by GTP. Its function is as follows. Catalyzes the conversion of uracil and 5-phospho-alpha-D-ribose 1-diphosphate (PRPP) to UMP and diphosphate. The sequence is that of Uracil phosphoribosyltransferase from Listeria innocua serovar 6a (strain ATCC BAA-680 / CLIP 11262).